Reading from the N-terminus, the 614-residue chain is Zinc metalloproteinase dpy-31 (614 aa).

A signal peptide spans M1 to G24. A propeptide spanning residues Y25–K150 is cleaved from the precursor. One can recognise a Peptidase M12A domain in the interval K150 to S349. Residue N190 is glycosylated (N-linked (GlcNAc...) asparagine). 5 disulfides stabilise this stretch: C193-C348, C216-C237, C352-C372, C374-C383, and C394-C422. H245 provides a ligand contact to Zn(2+). E246 is an active-site residue. Positions 249 and 255 each coordinate Zn(2+). The 41-residue stretch at N344–E384 folds into the EGF-like domain. The region spanning C394–L510 is the CUB domain. The N-linked (GlcNAc...) asparagine glycan is linked to N461. The 50-residue stretch at N513–N562 folds into the TSP type-1 domain. Intrachain disulfides connect C525–C556, C529–C561, and C541–C546.

The cofactor is Zn(2+).

It localises to the secreted. With respect to regulation, inhibited by marimastat and tripeptide hydroxamic acids. Inhibited by 1,10-phenanthroline. Its function is as follows. Metalloprotease which cleaves the carboxyl terminus of procollagens to mature collagens. Probably involved in cuticular collagen maturation. This chain is Zinc metalloproteinase dpy-31, found in Teladorsagia circumcincta (Brown stomach worm).